Here is a 329-residue protein sequence, read N- to C-terminus: Basic leucine zipper 61 (329 aa).

2 disordered regions span residues methionine 1–glutamine 22 and aspartate 98–lysine 204. A compositionally biased stretch (polar residues) spans threonine 10–glutamine 22. A compositionally biased stretch (low complexity) spans proline 119 to asparagine 133. The span at aspartate 139–aspartate 154 shows a compositional bias: basic and acidic residues. Positions asparagine 155–asparagine 169 are enriched in low complexity. The bZIP domain maps to aspartate 202 to glutamine 254. Residues lysine 204 to lysine 223 form a basic motif region. Residues leucine 230–leucine 251 form a leucine-zipper region. Polar residues predominate over residues lysine 304–serine 313. A disordered region spans residues lysine 304 to valine 329. Residues proline 319 to valine 329 are compositionally biased toward basic and acidic residues.

As to quaternary structure, forms heterodimers with BZIP18, BZIP43 and VIP1/BZIP51.

It localises to the nucleus. Functionally, transcriptional activator. The sequence is that of Basic leucine zipper 61 from Arabidopsis thaliana (Mouse-ear cress).